The chain runs to 198 residues: Cyclin-dependent kinase inhibitor 1B (198 aa).

Positions 1–11 are enriched in polar residues; it reads MSNVRVSNGSP. The interval 1 to 34 is disordered; that stretch reads MSNVRVSNGSPSLERMDARQAEHPKPSACRNLFG. The residue at position 10 (S10) is a Phosphoserine; by UHMK1. Residues 14–25 show a composition bias toward basic and acidic residues; it reads ERMDARQAEHPK. An interaction with CDK2 region spans residues 51-91; the sequence is DMEEASQRKWNFDFQNHKPLEGKYEWQEVEKGSLPEFYYRP. A Phosphotyrosine; by SRC modification is found at Y74. Positions 85–198 are disordered; it reads PEFYYRPPRP…KKPGLRRRQT (114 aa). Residue Y88 is modified to Phosphotyrosine; by ABL, LYN, SRC and JAK2. Y89 carries the post-translational modification Phosphotyrosine. The segment covering 126 to 137 has biased composition (basic and acidic residues); it reads EDTHLVDPKTDP. The short motif at 153-169 is the Nuclear localization signal element; the sequence is KRPATDDSSTQNKRANR. T157 is modified (phosphothreonine; by CaMK1, PKB/AKT1 and PIM1). Phosphothreonine is present on T170. Residues 175 to 186 show a composition bias toward polar residues; that stretch reads SDGSPNAGSVEQ. T187 is modified (phosphothreonine; by PKB/AKT1, CDK1 and CDK2). A Phosphothreonine; by CaMK1, PKB/AKT1, RPS6KA1, RPS6KA3 and PIM1 modification is found at T198.

Belongs to the CDI family. As to quaternary structure, forms a ternary complex composed of CCNE1, CDK2 and CDKN1B. Interacts directly with CCNE1; the interaction is inhibited by CDK2-dependent phosphorylation on Thr-187. Interacts with COPS5, subunit of the COP9 signalosome complex; the interaction leads to CDKN1B degradation. Interacts with NUP50; the interaction leads to nuclear import and degradation of phosphorylated CDKN1B. Interacts with CCND1 and SNX6. Interacts (Thr-198-phosphorylated form) with 14-3-3 proteins, binds strongly YWHAQ, weakly YWHAE and YWHAH, but not YWHAB nor YWHAZ; the interaction with YWHAQ results in translocation to the cytoplasm. Interacts with AKT1 and LYN; the interactions lead to cytoplasmic mislocation, phosphorylation of CDKN1B and inhibition of cell cycle arrest. Forms a ternary complex with CCNA2 and CDK2; CDKN1B inhibits the kinase activity of CDK2 through conformational rearrangements. Interacts (unphosphorylated form) with CDK2. Forms a complex with CDK2 and SPDYA, but does not directly interact with SPDYA. Forms a ternary complex composed of cyclin D, CDK4 and CDKN1B. Interacts (phosphorylated on Tyr-88 and Tyr-89) with CDK4; the interaction is required for cyclin D and CDK4 complex assembly, induces nuclear translocation and activates the CDK4 kinase activity. Interacts with GRB2. Interacts with PIM1. Identified in a complex with SKP1, SKP2 and CKS1B. Interacts with UHMK1; the interaction leads to cytoplasmic mislocation, phosphorylation of CDKN1B and inhibition of cell cycle arrest. Also interacts with CDK1. Dephosphorylated on Thr-187 by PPM1H, leading to CDKN1B stability. Interacts with HSPA8; the interaction may be associated with susceptibility to ubiquitination. Post-translationally, phosphorylated; phosphorylation occurs on serine, threonine and tyrosine residues. Phosphorylation on Ser-10 is the major site of phosphorylation in resting cells, takes place at the G(0)-G(1) phase and leads to protein stability. Phosphorylation on other sites is greatly enhanced by mitogens, growth factors, cMYC and in certain cancer cell lines. The phosphorylated form found in the cytoplasm is inactivate. Phosphorylation on Thr-198 is required for interaction with 14-3-3 proteins. Phosphorylation on Thr-187, by CDK1 and CDK2 leads to protein ubiquitination and proteasomal degradation. Tyrosine phosphorylation promotes this process. Phosphorylation by PKB/AKT1 can be suppressed by LY294002, an inhibitor of the catalytic subunit of PI3K. Phosphorylation on Tyr-88 and Tyr-89 has no effect on binding CDK2, but is required for binding CDK4. Dephosphorylated on tyrosine residues by G-CSF. Ubiquitinated; in the cytoplasm by the KPC complex (composed of RNF123/KPC1 and UBAC1/KPC2) and, in the nucleus, by SCF(SKP2). The latter requires prior phosphorylation on Thr-187. Ubiquitinated; by a TRIM21-containing SCF(SKP2)-like complex; leads to its degradation. In terms of processing, subject to degradation in the lysosome. Interaction with SNX6 promotes lysosomal degradation. As to expression, expressed in kidney (at protein level). Expressed in all tissues tested. Highest levels in skeletal muscle, lowest in liver and kidney.

It localises to the nucleus. Its subcellular location is the cytoplasm. The protein resides in the endosome. Its function is as follows. Important regulator of cell cycle progression. Inhibits the kinase activity of CDK2 bound to cyclin A, but has little inhibitory activity on CDK2 bound to SPDYA. Involved in G1 arrest. Potent inhibitor of cyclin E- and cyclin A-CDK2 complexes. Forms a complex with cyclin type D-CDK4 complexes and is involved in the assembly, stability, and modulation of CCND1-CDK4 complex activation. Acts either as an inhibitor or an activator of cyclin type D-CDK4 complexes depending on its phosphorylation state and/or stoichometry. This chain is Cyclin-dependent kinase inhibitor 1B, found in Homo sapiens (Human).